Reading from the N-terminus, the 388-residue chain is Lamin tail domain-containing protein 1 (388 aa).

An LTD domain is found at 136-254; the sequence is EVGQFTSSSL…QAIAWYTPIH (119 aa). The disordered stretch occupies residues 349–388; the sequence is EPHNTSTAGGRLDRQPRTRSTRPNRASGSKKKKTSESQKQ. Residues 365–381 are compositionally biased toward basic residues; it reads RTRSTRPNRASGSKKKK.

This sequence belongs to the intermediate filament family.

This is Lamin tail domain-containing protein 1 (LMNTD1) from Homo sapiens (Human).